Here is a 479-residue protein sequence, read N- to C-terminus: Sulfate adenylyltransferase subunit 1 (479 aa).

Residues 22–238 form the tr-type G domain; the sequence is KDMLRFLTCG…DSMDISKEPK (217 aa). Residues 31-38 form a G1 region; sequence GSVDDGKS. A GTP-binding site is contributed by 31-38; it reads GSVDDGKS. A G2 region spans residues 89 to 93; it reads GITID. The G3 stretch occupies residues 110 to 113; the sequence is DTPG. GTP is bound by residues 110-114 and 165-168; these read DTPGH and NKMD. The interval 165–168 is G4; it reads NKMD. Residues 202–204 are G5; the sequence is SAL.

The protein belongs to the TRAFAC class translation factor GTPase superfamily. Classic translation factor GTPase family. CysN/NodQ subfamily. Heterodimer composed of CysD, the smaller subunit, and CysN.

The enzyme catalyses sulfate + ATP + H(+) = adenosine 5'-phosphosulfate + diphosphate. It participates in sulfur metabolism; hydrogen sulfide biosynthesis; sulfite from sulfate: step 1/3. Functionally, with CysD forms the ATP sulfurylase (ATPS) that catalyzes the adenylation of sulfate producing adenosine 5'-phosphosulfate (APS) and diphosphate, the first enzymatic step in sulfur assimilation pathway. APS synthesis involves the formation of a high-energy phosphoric-sulfuric acid anhydride bond driven by GTP hydrolysis by CysN coupled to ATP hydrolysis by CysD. The protein is Sulfate adenylyltransferase subunit 1 of Sulfurovum sp. (strain NBC37-1).